The primary structure comprises 77 residues: EMBRYO SURROUNDING FACTOR 1-like protein 9 (77 aa).

Residues 1–22 (MSSSRFLILCIILISFFPLHEC) form the signal peptide. Disulfide bonds link Cys38-Cys54, Cys43-Cys75, Cys52-Cys71, and Cys55-Cys64.

Belongs to the MEG family. Expressed in flowers.

The protein is EMBRYO SURROUNDING FACTOR 1-like protein 9 (ESFL9) of Arabidopsis thaliana (Mouse-ear cress).